We begin with the raw amino-acid sequence, 105 residues long: Prokineticin-1 (105 aa).

The N-terminal stretch at 1 to 19 is a signal peptide; the sequence is MRGAVQVFIMLLLATVSDC. Disulfide bonds link C26–C38, C32–C50, C37–C78, C60–C86, and C80–C96.

It belongs to the AVIT (prokineticin) family.

It localises to the secreted. Its function is as follows. Potently contracts gastrointestinal (GI) smooth muscle. Induces proliferation, migration and fenestration (the formation of membrane discontinuities) in capillary endothelial cells derived from endocrine glands. Has little or no effect on a variety of other endothelial and non-endothelial cell types. Induces proliferation and differentiation, but not migration, of enteric neural crest cells. Directly influences neuroblastoma progression by promoting the proliferation and migration of neuroblastoma cells. Positively regulates PTGS2 expression and prostaglandin synthesis. May play a role in placentation. May play a role in normal and pathological testis angiogenesis. This Rattus norvegicus (Rat) protein is Prokineticin-1 (Prok1).